Reading from the N-terminus, the 368-residue chain is 1-deoxy-D-xylulose 5-phosphate reductoisomerase (368 aa).

The NADPH site is built by Thr-7, Gly-8, Ser-9, Ile-10, Gly-31, Lys-32, Asn-33, and Asn-113. Lys-114 is a 1-deoxy-D-xylulose 5-phosphate binding site. Glu-115 contributes to the NADPH binding site. Residue Asp-133 participates in Mn(2+) binding. 1-deoxy-D-xylulose 5-phosphate is bound by residues Ser-134, Glu-135, Ser-158, and His-181. A Mn(2+)-binding site is contributed by Glu-135. NADPH is bound at residue Gly-187. 4 residues coordinate 1-deoxy-D-xylulose 5-phosphate: Ser-194, Asn-199, Lys-200, and Glu-203. Glu-203 provides a ligand contact to Mn(2+).

This sequence belongs to the DXR family. It depends on Mg(2+) as a cofactor. Mn(2+) is required as a cofactor.

The catalysed reaction is 2-C-methyl-D-erythritol 4-phosphate + NADP(+) = 1-deoxy-D-xylulose 5-phosphate + NADPH + H(+). It participates in isoprenoid biosynthesis; isopentenyl diphosphate biosynthesis via DXP pathway; isopentenyl diphosphate from 1-deoxy-D-xylulose 5-phosphate: step 1/6. Functionally, catalyzes the NADPH-dependent rearrangement and reduction of 1-deoxy-D-xylulose-5-phosphate (DXP) to 2-C-methyl-D-erythritol 4-phosphate (MEP). This chain is 1-deoxy-D-xylulose 5-phosphate reductoisomerase, found in Helicobacter pylori (strain HPAG1).